The primary structure comprises 555 residues: Undecaprenyl phosphate-alpha-4-amino-4-deoxy-L-arabinose arabinosyl transferase (555 aa).

11 helical membrane passes run 6-26 (GSWA…PLNG), 87-107 (FGSV…AMLM), 116-136 (LATL…YSVL), 178-198 (FMTK…PIVI), 206-226 (LLIY…PWAL), 257-277 (APFW…LALL), 293-313 (ELFF…IAKG), 315-335 (LPTY…AYAE), 351-371 (VLNG…GSGL), 384-404 (PKIV…VVSV), and 411-431 (WSWA…AIPQ).

Belongs to the glycosyltransferase 83 family.

The protein resides in the cell inner membrane. It catalyses the reaction 4-amino-4-deoxy-alpha-L-arabinopyranosyl di-trans,octa-cis-undecaprenyl phosphate + lipid IVA = lipid IIA + di-trans,octa-cis-undecaprenyl phosphate.. The protein operates within lipopolysaccharide metabolism; 4-amino-4-deoxy-beta-L-arabinose-lipid A biosynthesis. In terms of biological role, catalyzes the transfer of the L-Ara4N moiety of the glycolipid undecaprenyl phosphate-alpha-L-Ara4N to lipid A. The modified arabinose is attached to lipid A and is required for resistance to polymyxin and cationic antimicrobial peptides. This Serratia proteamaculans (strain 568) protein is Undecaprenyl phosphate-alpha-4-amino-4-deoxy-L-arabinose arabinosyl transferase.